Reading from the N-terminus, the 252-residue chain is Adenosylcobinamide-GDP ribazoletransferase (252 aa).

The next 5 membrane-spanning stretches (helical) occupy residues 33–53, 105–125, 132–152, 184–204, and 215–235; these read FISPLMVGIITGIIDWFVVLL, TGSGAIGLFLVYFSIFLIATL, LWFFLPSEVLARASAISLLGL, FAILFSSPVLILAYVILLLVF, and MSGDIVGAIITLSFPIYLLVA.

Belongs to the CobS family. It depends on Mg(2+) as a cofactor.

It is found in the cell membrane. The catalysed reaction is alpha-ribazole + adenosylcob(III)inamide-GDP = adenosylcob(III)alamin + GMP + H(+). The enzyme catalyses alpha-ribazole 5'-phosphate + adenosylcob(III)inamide-GDP = adenosylcob(III)alamin 5'-phosphate + GMP + H(+). Its pathway is cofactor biosynthesis; adenosylcobalamin biosynthesis; adenosylcobalamin from cob(II)yrinate a,c-diamide: step 7/7. Its function is as follows. Joins adenosylcobinamide-GDP and alpha-ribazole to generate adenosylcobalamin (Ado-cobalamin). Also synthesizes adenosylcobalamin 5'-phosphate from adenosylcobinamide-GDP and alpha-ribazole 5'-phosphate. This Sulfolobus acidocaldarius (strain ATCC 33909 / DSM 639 / JCM 8929 / NBRC 15157 / NCIMB 11770) protein is Adenosylcobinamide-GDP ribazoletransferase.